The chain runs to 185 residues: Dirigent protein 12 (185 aa).

A signal peptide spans 1–25; it reads MTNQIYKQVFSFFLSVLLLQSSTVS. Cys-37 and Cys-184 are joined by a disulfide. N-linked (GlcNAc...) asparagine glycosylation is found at Asn-56 and Asn-120.

It belongs to the plant dirigent protein family. Homodimer. In terms of tissue distribution, seed coat specific expression.

It is found in the secreted. The protein resides in the extracellular space. It localises to the apoplast. Its function is as follows. Dirigent proteins impart stereoselectivity on the phenoxy radical-coupling reaction, yielding optically active lignans from two molecules of coniferyl alcohol in the biosynthesis of lignans, flavonolignans, and alkaloids and thus plays a central role in plant secondary metabolism. Required for seed accumulation of neolignans. The sequence is that of Dirigent protein 12 (DIR12) from Arabidopsis thaliana (Mouse-ear cress).